The following is a 330-amino-acid chain: Phosphate acyltransferase (330 aa).

This sequence belongs to the PlsX family. Homodimer. Probably interacts with PlsY.

It localises to the cytoplasm. It catalyses the reaction a fatty acyl-[ACP] + phosphate = an acyl phosphate + holo-[ACP]. It functions in the pathway lipid metabolism; phospholipid metabolism. Catalyzes the reversible formation of acyl-phosphate (acyl-PO(4)) from acyl-[acyl-carrier-protein] (acyl-ACP). This enzyme utilizes acyl-ACP as fatty acyl donor, but not acyl-CoA. The sequence is that of Phosphate acyltransferase from Bacillus cereus (strain AH820).